A 306-amino-acid chain; its full sequence is Pyridoxal 5'-phosphate synthase subunit SNZERR (306 aa).

D34 contributes to the D-ribose 5-phosphate binding site. K91 (schiff-base intermediate with D-ribose 5-phosphate) is an active-site residue. G163 serves as a coordination point for D-ribose 5-phosphate. D-glyceraldehyde 3-phosphate is bound at residue R175. D-ribose 5-phosphate-binding positions include G224 and 245–246 (GS).

It belongs to the PdxS/SNZ family.

It catalyses the reaction aldehydo-D-ribose 5-phosphate + D-glyceraldehyde 3-phosphate + L-glutamine = pyridoxal 5'-phosphate + L-glutamate + phosphate + 3 H2O + H(+). It functions in the pathway cofactor biosynthesis; pyridoxal 5'-phosphate biosynthesis. Functionally, catalyzes the formation of pyridoxal 5'-phosphate from ribose 5-phosphate (RBP), glyceraldehyde 3-phosphate (G3P) and ammonia. The ammonia is provided by PDX2. Can also use ribulose 5-phosphate and dihydroxyacetone phosphate as substrates, resulting from enzyme-catalyzed isomerization of RBP and G3P, respectively. Also plays an indirect role in resistance to singlet oxygen-generating photosensitizers. The polypeptide is Pyridoxal 5'-phosphate synthase subunit SNZERR (SNZERR) (Suberites domuncula (Sponge)).